Consider the following 196-residue polypeptide: HTH-type transcriptional regulator BetI (196 aa).

Positions 8–68 (PIRRSQLIAA…ATMRHLMQAL (61 aa)) constitute an HTH tetR-type domain. Residues 31–50 (SIAYIARLAGVSNGIISHYF) constitute a DNA-binding region (H-T-H motif).

It participates in amine and polyamine biosynthesis; betaine biosynthesis via choline pathway [regulation]. Functionally, repressor involved in the biosynthesis of the osmoprotectant glycine betaine. It represses transcription of the choline transporter BetT and the genes of BetAB involved in the synthesis of glycine betaine. The polypeptide is HTH-type transcriptional regulator BetI (Ectopseudomonas mendocina (strain ymp) (Pseudomonas mendocina)).